The chain runs to 968 residues: RNA polymerase-associated protein RapA (968 aa).

The Helicase ATP-binding domain occupies 164–334; that stretch reads DVGRRHAPRV…FARLRLLDPN (171 aa). Position 177 to 184 (177 to 184) interacts with ATP; the sequence is DEVGLGKT. The short motif at 280-283 is the DEAH box element; that stretch reads DEAH. In terms of domain architecture, Helicase C-terminal spans 490-685; the sequence is RVEWLMGYLT…ALKAQLEQGR (196 aa).

This sequence belongs to the SNF2/RAD54 helicase family. RapA subfamily. As to quaternary structure, interacts with the RNAP. Has a higher affinity for the core RNAP than for the holoenzyme. Its ATPase activity is stimulated by binding to RNAP.

Transcription regulator that activates transcription by stimulating RNA polymerase (RNAP) recycling in case of stress conditions such as supercoiled DNA or high salt concentrations. Probably acts by releasing the RNAP, when it is trapped or immobilized on tightly supercoiled DNA. Does not activate transcription on linear DNA. Probably not involved in DNA repair. The chain is RNA polymerase-associated protein RapA from Salmonella choleraesuis (strain SC-B67).